The chain runs to 1055 residues: Kinesin-like protein KIN-7D, mitochondrial (1055 aa).

Over residues 1-23 the composition is skewed to low complexity; that stretch reads MASSSSRTRSSRPPSPASSTSSS. Residues 1 to 36 are disordered; the sequence is MASSSSRTRSSRPPSPASSTSSSHLSNRLIPRSNST. A mitochondrion-targeting transit peptide spans 1-96; the sequence is MASSSSRTRS…PMDDTISSER (96 aa). The Kinesin motor domain maps to 98-415; the sequence is SISVTVRFRP…LKFASRAKSI (318 aa). ATP is bound at residue 178 to 185; sequence GVTSSGKT. 3 coiled-coil regions span residues 419-503, 618-653, and 694-823; these read ASRN…ILVS, PENS…GEAS, and LQEK…LAQT. Residues 826 to 856 are disordered; that stretch reads PMNGVNRKYNDGARSGRKGRISSSRSSGDEF. Residues 880–911 adopt a coiled-coil conformation; sequence LESALAEKEFIEDEYRKKAEEAKRREEALEND. Residues 926–963 form a disordered region; that stretch reads NGALPEPNGTDPGRELEKSQSHAVLKERQVSSAPRQPE. A compositionally biased stretch (basic and acidic residues) spans 937–954; the sequence is PGRELEKSQSHAVLKERQ. Residues 1008 to 1043 form an RING-type zinc finger; it reads CKVCFESPTAAILLPCRHFCLCKSCSLACSECPICR.

The protein belongs to the TRAFAC class myosin-kinesin ATPase superfamily. Kinesin family. KIN-7 subfamily.

It is found in the mitochondrion. This Arabidopsis thaliana (Mouse-ear cress) protein is Kinesin-like protein KIN-7D, mitochondrial.